The sequence spans 287 residues: ATP synthase gamma chain (287 aa).

Belongs to the ATPase gamma chain family. In terms of assembly, F-type ATPases have 2 components, CF(1) - the catalytic core - and CF(0) - the membrane proton channel. CF(1) has five subunits: alpha(3), beta(3), gamma(1), delta(1), epsilon(1). CF(0) has three main subunits: a, b and c.

It is found in the cell inner membrane. In terms of biological role, produces ATP from ADP in the presence of a proton gradient across the membrane. The gamma chain is believed to be important in regulating ATPase activity and the flow of protons through the CF(0) complex. The sequence is that of ATP synthase gamma chain from Xylella fastidiosa (strain M12).